Consider the following 305-residue polypeptide: 4-diphosphocytidyl-2-C-methyl-D-erythritol kinase (305 aa).

K18 is an active-site residue. 103-113 (PYGAGLGGGSS) serves as a coordination point for ATP. Residue D145 is part of the active site.

The protein belongs to the GHMP kinase family. IspE subfamily.

It carries out the reaction 4-CDP-2-C-methyl-D-erythritol + ATP = 4-CDP-2-C-methyl-D-erythritol 2-phosphate + ADP + H(+). It functions in the pathway isoprenoid biosynthesis; isopentenyl diphosphate biosynthesis via DXP pathway; isopentenyl diphosphate from 1-deoxy-D-xylulose 5-phosphate: step 3/6. Its function is as follows. Catalyzes the phosphorylation of the position 2 hydroxy group of 4-diphosphocytidyl-2C-methyl-D-erythritol. The protein is 4-diphosphocytidyl-2-C-methyl-D-erythritol kinase of Lawsonia intracellularis (strain PHE/MN1-00).